Consider the following 906-residue polypeptide: Catenin alpha-1 (906 aa).

Thr2 carries the post-translational modification N-acetylthreonine. Positions 2-228 (TAVHAGNINF…PILYTASQAC (227 aa)) are involved in homodimerization. A Glycyl lysine isopeptide (Lys-Gly) (interchain with G-Cter in SUMO2) cross-link involves residue Lys57. Positions 97–148 (VRKQGDLMKAAAGEFADDPCSSVKRGNMVRAARALLSAVTRLLILADMADVY) are interaction with JUP and CTNNB1. Ser264, Ser268, Ser295, and Ser297 each carry phosphoserine. Residues 325 to 394 (TRDDRRERIV…AVMDHVSDSF (70 aa)) are interaction with alpha-actinin. Residue Thr634 is modified to Phosphothreonine. Phosphoserine; by CK2 is present on Ser641. The residue at position 645 (Thr645) is a Phosphothreonine. Residues Ser652 and Ser655 each carry the phosphoserine; by CK1 modification. At Thr658 the chain carries Phosphothreonine; by CK1. Lys797 participates in a covalent cross-link: Glycyl lysine isopeptide (Lys-Gly) (interchain with G-Cter in SUMO2). A Phosphoserine modification is found at Ser851. Over residues 864 to 880 (PEKKPLVKREKQDETQT) the composition is skewed to basic and acidic residues. Residues 864-894 (PEKKPLVKREKQDETQTKIKRASQKKHVNPV) are disordered. A compositionally biased stretch (basic residues) spans 881 to 891 (KIKRASQKKHV).

It belongs to the vinculin/alpha-catenin family. In terms of assembly, monomer and homodimer; the monomer preferentially binds to CTNNB1 and the homodimer to actin. Component of an cadherin:catenin adhesion complex composed of at least of CDH26, beta-catenin/CTNNB1, alpha-catenin/CTNNA1 and p120 catenin/CTNND1. Possible component of an E-cadherin/ catenin adhesion complex together with E-cadherin/CDH1 and beta-catenin/CTNNB1 or gamma-catenin/JUP; the complex is located to adherens junctions. The stable association of CTNNA1 is controversial as CTNNA1 was shown not to bind to F-actin when assembled in the complex. Alternatively, the CTNNA1-containing complex may be linked to F-actin by other proteins such as LIMA1. Binds AFDN and F-actin. Interacts with ARHGAP21. Interacts with AJUBA. Interacts with LIMA1. Interacts with vinculin/VCL. Interacts with TJP2/ZO2 (via N-terminus). Interacts with TJP1/ZO1 (via N-terminus). Post-translationally, sumoylated. In terms of processing, phosphorylation seems to contribute to the strength of cell-cell adhesion rather than to the basic capacity for cell-cell adhesion. Ubiquitously expressed in normal tissues. As to expression, abundantly expressed in brain and cerebellum, also expressed in the placenta, liver, lung, colon, heart, pancreas, stomach and thymus.

It is found in the cytoplasm. The protein localises to the cytoskeleton. The protein resides in the cell junction. It localises to the adherens junction. Its subcellular location is the cell membrane. It is found in the nucleus. Associates with the cytoplasmic domain of a variety of cadherins. The association of catenins to cadherins produces a complex which is linked to the actin filament network, and which seems to be of primary importance for cadherins cell-adhesion properties. Can associate with both E- and N-cadherins. Originally believed to be a stable component of E-cadherin/catenin adhesion complexes and to mediate the linkage of cadherins to the actin cytoskeleton at adherens junctions. In contrast, cortical actin was found to be much more dynamic than E-cadherin/catenin complexes and CTNNA1 was shown not to bind to F-actin when assembled in the complex suggesting a different linkage between actin and adherens junctions components. The homodimeric form may regulate actin filament assembly and inhibit actin branching by competing with the Arp2/3 complex for binding to actin filaments. Involved in the regulation of WWTR1/TAZ, YAP1 and TGFB1-dependent SMAD2 and SMAD3 nuclear accumulation. May play a crucial role in cell differentiation. This Homo sapiens (Human) protein is Catenin alpha-1.